Here is a 346-residue protein sequence, read N- to C-terminus: Leucine zipper protein 2 (346 aa).

Positions 1 to 19 are cleaved as a signal peptide; sequence MKFSPAHYLLPLLPALVLS. The stretch at 16-211 forms a coiled coil; it reads LVLSTRQDYE…QMKAMKETVQ (196 aa). An N-linked (GlcNAc...) asparagine glycan is attached at N133. The segment at 164 to 192 is leucine-zipper; it reads LRYGKKDLLFKAQQLTDLEQKLAVAKNEL. 2 disordered regions span residues 221–240 and 248–346; these read QPPP…LLPP and PDAA…EKIL. Residues 250 to 261 are compositionally biased toward low complexity; the sequence is AAAKSKPQQSAS. Over residues 262 to 283 the composition is skewed to polar residues; that stretch reads GNNESSQVESTKEGNPSTTACD. A glycan (N-linked (GlcNAc...) asparagine) is linked at N264. Over residues 286 to 298 the composition is skewed to basic and acidic residues; that stretch reads DEGRPCSMKHKES. Residue N302 is glycosylated (N-linked (GlcNAc...) asparagine).

It is found in the secreted. The protein is Leucine zipper protein 2 (LUZP2) of Homo sapiens (Human).